A 220-amino-acid polypeptide reads, in one-letter code: MSILFISGTGTDVGKTIATAALASAFHHRGDRVIPVKPVQTGEPDGRGDIHTVEKLSGIRGVEFTRYPDPLAPNLAARRAGLPQVTLPDLAREIRDLDAPDRIVLVEGAGGVLVRLADDLTLLDVAAELDAPLVLVTSLGLGSLNAAELSVQAARTAGVEVLGLIGGSASPDPGLAEQLNHGELTRICRVPLLGVLPAGAGDLLPDDFQAMAQSCLTLPL.

12–17 (DVGKTI) serves as a coordination point for ATP. Residue Thr16 coordinates Mg(2+). The active site involves Lys37. Thr41 contributes to the substrate binding site. ATP contacts are provided by residues Asp49, 107 to 110 (EGAG), 167 to 168 (GS), and 197 to 199 (PAG). The Mg(2+) site is built by Asp49 and Glu107.

It belongs to the dethiobiotin synthetase family. As to quaternary structure, homodimer. Requires Mg(2+) as cofactor.

It localises to the cytoplasm. The enzyme catalyses (7R,8S)-7,8-diammoniononanoate + CO2 + ATP = (4R,5S)-dethiobiotin + ADP + phosphate + 3 H(+). The protein operates within cofactor biosynthesis; biotin biosynthesis; biotin from 7,8-diaminononanoate: step 1/2. Its function is as follows. Catalyzes a mechanistically unusual reaction, the ATP-dependent insertion of CO2 between the N7 and N8 nitrogen atoms of 7,8-diaminopelargonic acid (DAPA, also called 7,8-diammoniononanoate) to form a ureido ring. The sequence is that of ATP-dependent dethiobiotin synthetase BioD from Corynebacterium efficiens (strain DSM 44549 / YS-314 / AJ 12310 / JCM 11189 / NBRC 100395).